The primary structure comprises 446 residues: B3 domain-containing protein REM12 (446 aa).

Residues 1–46 (MVLNSSDLGPSRCDIRDLPAPSSTNDQGKTELARKKKVKRSNTEIE) form a disordered region. DNA-binding regions (TF-B3) lie at residues 56–153 (CFVA…FCST) and 193–289 (FMTL…VNTQ). The disordered stretch occupies residues 295 to 334 (SQQGECSRDSEKESSICAEPSRGNKKWKATNNRKERRDSS). Residues 341–435 (YVTLTLTPED…TTPVFKFCSN (95 aa)) constitute a DNA-binding region (TF-B3 3).

Its subcellular location is the nucleus. The sequence is that of B3 domain-containing protein REM12 (REM12) from Arabidopsis thaliana (Mouse-ear cress).